Reading from the N-terminus, the 247-residue chain is Neurotrophic factor BDNF precursor form (247 aa).

An N-terminal signal peptide occupies residues 1-18; the sequence is MTILFLTMVISYFGCMKA. Positions 19–128 are excised as a propeptide; sequence APMKEANVRG…AANMSMRVRR (110 aa). Asn-121 carries an N-linked (GlcNAc...) asparagine glycan. Cystine bridges form between Cys-141-Cys-208, Cys-186-Cys-237, and Cys-196-Cys-239.

This sequence belongs to the NGF-beta family. Monomers and homodimers. Binds to NTRK2/TRKB. Can form heterodimers with other neurotrophin family members, such as NTF3 and NTF4 (in vitro), but the physiological relevance of this is not clear. BDNF precursor form: interacts with the heterodimer formed by NGFR and SORCS2. Mature BDNF has much lower affinity for the heterodimer formed by NGFR and SORCS2. In terms of processing, N-glycosylated and glycosulfated, contrary to mature BDNF. Mature BDNF is produced by proteolytic removal of the propeptide, catalyzed by a FURIN family member. In addition, the precursor form is proteolytically cleaved within the propeptide, but this is not an obligatory intermediate for the production of mature BDNF. Can be converted into mature BDNF by plasmin (PLG).

It is found in the secreted. In terms of biological role, important signaling molecule that activates signaling cascades downstream of NTRK2. During development, promotes the survival and differentiation of selected neuronal populations of the peripheral and central nervous systems. Participates in axonal growth, pathfinding and in the modulation of dendritic growth and morphology. Major regulator of synaptic transmission and plasticity at adult synapses in many regions of the CNS. The versatility of BDNF is emphasized by its contribution to a range of adaptive neuronal responses including long-term potentiation (LTP), long-term depression (LTD), certain forms of short-term synaptic plasticity, as well as homeostatic regulation of intrinsic neuronal excitability. Its function is as follows. Important signaling molecule that activates signaling cascades downstream of NTRK2. Activates signaling cascades via the heterodimeric receptor formed by NGFR and SORCS2. Signaling via NGFR and SORCS2 plays a role in synaptic plasticity and long-term depression (LTD). Binding to NGFR and SORCS2 promotes neuronal apoptosis. Promotes neuronal growth cone collapse. This chain is Neurotrophic factor BDNF precursor form (BDNF), found in Ailurus fulgens (Himalayan red panda).